We begin with the raw amino-acid sequence, 188 residues long: Elongation factor P (188 aa).

This sequence belongs to the elongation factor P family.

It localises to the cytoplasm. It functions in the pathway protein biosynthesis; polypeptide chain elongation. In terms of biological role, involved in peptide bond synthesis. Stimulates efficient translation and peptide-bond synthesis on native or reconstituted 70S ribosomes in vitro. Probably functions indirectly by altering the affinity of the ribosome for aminoacyl-tRNA, thus increasing their reactivity as acceptors for peptidyl transferase. The polypeptide is Elongation factor P (Bdellovibrio bacteriovorus (strain ATCC 15356 / DSM 50701 / NCIMB 9529 / HD100)).